Consider the following 151-residue polypeptide: Ribosome maturation factor RimP (151 aa).

Belongs to the RimP family.

Its subcellular location is the cytoplasm. Required for maturation of 30S ribosomal subunits. The protein is Ribosome maturation factor RimP of Shewanella piezotolerans (strain WP3 / JCM 13877).